The sequence spans 383 residues: 1-deoxy-D-xylulose 5-phosphate reductoisomerase (383 aa).

NADPH contacts are provided by Thr10, Gly11, Ser12, Ile13, and Asn123. Lys124 lines the 1-deoxy-D-xylulose 5-phosphate pocket. Glu125 contributes to the NADPH binding site. Asp149 lines the Mn(2+) pocket. 1-deoxy-D-xylulose 5-phosphate-binding residues include Ser150, Glu151, Ser175, and His198. A Mn(2+)-binding site is contributed by Glu151. Residue Gly204 coordinates NADPH. 4 residues coordinate 1-deoxy-D-xylulose 5-phosphate: Ser211, Asn216, Lys217, and Glu220. A Mn(2+)-binding site is contributed by Glu220.

It belongs to the DXR family. It depends on Mg(2+) as a cofactor. Mn(2+) is required as a cofactor.

The catalysed reaction is 2-C-methyl-D-erythritol 4-phosphate + NADP(+) = 1-deoxy-D-xylulose 5-phosphate + NADPH + H(+). It participates in isoprenoid biosynthesis; isopentenyl diphosphate biosynthesis via DXP pathway; isopentenyl diphosphate from 1-deoxy-D-xylulose 5-phosphate: step 1/6. In terms of biological role, catalyzes the NADPH-dependent rearrangement and reduction of 1-deoxy-D-xylulose-5-phosphate (DXP) to 2-C-methyl-D-erythritol 4-phosphate (MEP). In Desulfosudis oleivorans (strain DSM 6200 / JCM 39069 / Hxd3) (Desulfococcus oleovorans), this protein is 1-deoxy-D-xylulose 5-phosphate reductoisomerase.